We begin with the raw amino-acid sequence, 61 residues long: Large ribosomal subunit protein uL29 (61 aa).

It belongs to the universal ribosomal protein uL29 family.

The chain is Large ribosomal subunit protein uL29 from Campylobacter lari (strain RM2100 / D67 / ATCC BAA-1060).